The primary structure comprises 233 residues: Antiholin-like protein LrgB (233 aa).

Transmembrane regions (helical) follow at residues 5 to 25 (LGIN…VIAT), 33 to 53 (GFFL…FLKL), 63 to 83 (IGGD…AIPL), 97 to 117 (IFGG…LVAI), 152 to 172 (LTSL…AKIV), and 212 to 232 (IAVV…APIL).

The protein belongs to the CidB/LrgB family. LrgB subfamily.

The protein resides in the cell membrane. Functionally, inhibits the expression or activity of extracellular murein hydrolases by interacting, possibly with LrgA, with the holin-like proteins CidA and/or CidB. The LrgAB and CidAB proteins may affect the proton motive force of the membrane. May be involved in programmed cell death (PCD), possibly triggering PCD in response to antibiotics and environmental stresses. In Staphylococcus epidermidis (strain ATCC 12228 / FDA PCI 1200), this protein is Antiholin-like protein LrgB.